The sequence spans 434 residues: Probable proline transporter 2 (434 aa).

11 consecutive transmembrane segments (helical) span residues 26 to 46 (PWYQ…VLGY), 49 to 69 (SVMV…AAAI), 106 to 126 (LTWA…IILA), 149 to 169 (IALS…LSAL), 171 to 191 (IWLG…FVLS), 213 to 233 (IFTT…GMLP), 251 to 271 (LWFQ…MGYW), 297 to 317 (LSAF…MYEF), 339 to 359 (VGVR…LPFL), 362 to 382 (FMSL…ANHM), and 403 to 423 (VAGF…LIMV).

It belongs to the amino acid/polyamine transporter 2 family. Amino acid/auxin permease (AAAP) (TC 2.A.18.3) subfamily.

It localises to the cell membrane. Its function is as follows. Proline transporter that mediates proline transport across the plasma membrane. This Oryza sativa subsp. japonica (Rice) protein is Probable proline transporter 2.